The following is a 423-amino-acid chain: MKVLLIGSGGREHALAWKIAQSPLIDALYAAPGNPGIADHATLVSLDVEDHAAVIAFAKEKAIDFVVIGPEAPLVAGLADDLRAAGIATFGPSKAAAQLEGSKGFTKDLCARYDIPTGAYERFKAAEPAKDYVRAQGAPIVIKADGLAAGKGVTVAMTEAEALAAIDDCFDGAFGTAGTEVVVEAFLDGEEASFFCLSDGKTALALATAQDHKRVGDGDTGPNTGGMGAYSPAPVMTPAMVERTMKEIIEPTISGMAKDGNPFSGVFFAGLMITAKGPELIEYNVRFGDPECQVLMMRLKSDLLPILYATATGTLDKVQAEWRDDAALTVVLASKGYPGAYDKNTPIAHIPEASEEAKVFHAGTALKDGKLVATGGRVLNVTAFGRNVTEAQARAYALADKVEWENGFCRRDIGWQAIAREKA.

The ATP-grasp domain occupies 107–312 (KDLCARYDIP…LLPILYATAT (206 aa)). Position 133–193 (133–193 (VRAQGAPIVI…EAFLDGEEAS (61 aa))) interacts with ATP. Residues Glu282 and Asn284 each contribute to the Mg(2+) site.

The protein belongs to the GARS family. Requires Mg(2+) as cofactor. Mn(2+) is required as a cofactor.

It carries out the reaction 5-phospho-beta-D-ribosylamine + glycine + ATP = N(1)-(5-phospho-beta-D-ribosyl)glycinamide + ADP + phosphate + H(+). Its pathway is purine metabolism; IMP biosynthesis via de novo pathway; N(1)-(5-phospho-D-ribosyl)glycinamide from 5-phospho-alpha-D-ribose 1-diphosphate: step 2/2. In Agrobacterium fabrum (strain C58 / ATCC 33970) (Agrobacterium tumefaciens (strain C58)), this protein is Phosphoribosylamine--glycine ligase.